A 395-amino-acid polypeptide reads, in one-letter code: Imidazolonepropionase (395 aa).

Fe(3+) is bound by residues His72 and His74. Positions 72 and 74 each coordinate Zn(2+). Positions 81, 144, and 174 each coordinate 4-imidazolone-5-propanoate. Tyr144 provides a ligand contact to N-formimidoyl-L-glutamate. Residue His231 participates in Fe(3+) binding. His231 provides a ligand contact to Zn(2+). Glu234 is a binding site for 4-imidazolone-5-propanoate. Fe(3+) is bound at residue Asp306. A Zn(2+)-binding site is contributed by Asp306.

The protein belongs to the metallo-dependent hydrolases superfamily. HutI family. Zn(2+) is required as a cofactor. It depends on Fe(3+) as a cofactor.

Its subcellular location is the cytoplasm. It catalyses the reaction 4-imidazolone-5-propanoate + H2O = N-formimidoyl-L-glutamate. It participates in amino-acid degradation; L-histidine degradation into L-glutamate; N-formimidoyl-L-glutamate from L-histidine: step 3/3. In terms of biological role, catalyzes the hydrolytic cleavage of the carbon-nitrogen bond in imidazolone-5-propanoate to yield N-formimidoyl-L-glutamate. It is the third step in the universal histidine degradation pathway. This Pyrobaculum arsenaticum (strain DSM 13514 / JCM 11321 / PZ6) protein is Imidazolonepropionase.